Reading from the N-terminus, the 170-residue chain is MGVDQPLGDNFITTSLDSLVNWARKSSIWPMTFGLACCAIEMMATGASHNDLDRFGIIFRASPRQSDCIIIAGTVTKKMLPVIKTVYEQMPEPKWVVAMGACACSGGVFDTYSVVQGIDTALPVDVYIPGCPPRPEALLYGLLKLQDKIMKDKNSFGSTIGLGERLESAA.

[4Fe-4S] cluster contacts are provided by Cys37, Cys38, Cys102, and Cys131.

The protein belongs to the complex I 20 kDa subunit family. NDH-1 is composed of 14 different subunits. Subunits NuoB, C, D, E, F, and G constitute the peripheral sector of the complex. The cofactor is [4Fe-4S] cluster.

The protein resides in the cell inner membrane. It carries out the reaction a quinone + NADH + 5 H(+)(in) = a quinol + NAD(+) + 4 H(+)(out). Functionally, NDH-1 shuttles electrons from NADH, via FMN and iron-sulfur (Fe-S) centers, to quinones in the respiratory chain. The immediate electron acceptor for the enzyme in this species is believed to be ubiquinone. Couples the redox reaction to proton translocation (for every two electrons transferred, four hydrogen ions are translocated across the cytoplasmic membrane), and thus conserves the redox energy in a proton gradient. This is NADH-quinone oxidoreductase subunit B from Geobacter sulfurreducens (strain ATCC 51573 / DSM 12127 / PCA).